Consider the following 131-residue polypeptide: Small ribosomal subunit protein uS8 (131 aa).

The protein belongs to the universal ribosomal protein uS8 family. Part of the 30S ribosomal subunit. Contacts proteins S5 and S12.

One of the primary rRNA binding proteins, it binds directly to 16S rRNA central domain where it helps coordinate assembly of the platform of the 30S subunit. The polypeptide is Small ribosomal subunit protein uS8 (Chlorobium luteolum (strain DSM 273 / BCRC 81028 / 2530) (Pelodictyon luteolum)).